A 373-amino-acid polypeptide reads, in one-letter code: UDP-glucose 4-epimerase 3 (373 aa).

Position 27–58 (27–58 (SVLVTGGAGYIGTHTVLRLLEKGFAVTVVDNF)) interacts with NAD(+). Residue serine 153 coordinates substrate. Catalysis depends on tyrosine 177, which acts as the Proton acceptor.

Belongs to the NAD(P)-dependent epimerase/dehydratase family. The cofactor is NAD(+).

The enzyme catalyses UDP-alpha-D-glucose = UDP-alpha-D-galactose. It functions in the pathway carbohydrate metabolism; galactose metabolism. Catalyzes the interconversion between UDP-glucose and UDP-galactose. This chain is UDP-glucose 4-epimerase 3 (UGE-3), found in Oryza sativa subsp. japonica (Rice).